The sequence spans 211 residues: Dual specificity protein phosphatase 26 (211 aa).

Positions 60–207 (NHADEVWPGL…LLALDRRLRQ (148 aa)) constitute a Tyrosine-protein phosphatase domain. Cys152 functions as the Phosphocysteine intermediate in the catalytic mechanism.

The protein belongs to the protein-tyrosine phosphatase family. Non-receptor class dual specificity subfamily. Interacts with HSF4.

Its subcellular location is the cytoplasm. The protein localises to the nucleus. It localises to the golgi apparatus. The catalysed reaction is O-phospho-L-tyrosyl-[protein] + H2O = L-tyrosyl-[protein] + phosphate. It catalyses the reaction O-phospho-L-seryl-[protein] + H2O = L-seryl-[protein] + phosphate. It carries out the reaction O-phospho-L-threonyl-[protein] + H2O = L-threonyl-[protein] + phosphate. Functionally, inactivates MAPK1 and MAPK3 which leads to dephosphorylation of heat shock factor protein 4 and a reduction in its DNA-binding activity. The polypeptide is Dual specificity protein phosphatase 26 (DUSP26) (Bos taurus (Bovine)).